Here is a 256-residue protein sequence, read N- to C-terminus: Small ribosomal subunit protein eS1 (256 aa).

Residues 1–18 (MAVGKNKRLSKGKKGVKK) show a composition bias toward basic residues. The interval 1 to 20 (MAVGKNKRLSKGKKGVKKRT) is disordered. Alanine 2 carries the post-translational modification N-acetylalanine; partial.

It belongs to the eukaryotic ribosomal protein eS1 family. Component of the small ribosomal subunit. Mature ribosomes consist of a small (40S) and a large (60S) subunit. The 40S subunit contains about 33 different proteins and 1 molecule of RNA (18S). The 60S subunit contains about 49 different proteins and 3 molecules of RNA (25S, 5.8S and 5S).

The protein localises to the cytoplasm. This chain is Small ribosomal subunit protein eS1 (rps1), found in Aspergillus clavatus (strain ATCC 1007 / CBS 513.65 / DSM 816 / NCTC 3887 / NRRL 1 / QM 1276 / 107).